We begin with the raw amino-acid sequence, 212 residues long: Glycerol-3-phosphate acyltransferase (212 aa).

Helical transmembrane passes span 5–25 (ALGM…ILVC), 53–73 (VAAA…VWLA), 80–100 (PLYL…PVFF), 112–132 (FGAI…TWLL), and 138–158 (GYSS…VWWF).

This sequence belongs to the PlsY family. Probably interacts with PlsX.

Its subcellular location is the cell inner membrane. It catalyses the reaction an acyl phosphate + sn-glycerol 3-phosphate = a 1-acyl-sn-glycero-3-phosphate + phosphate. It functions in the pathway lipid metabolism; phospholipid metabolism. Catalyzes the transfer of an acyl group from acyl-phosphate (acyl-PO(4)) to glycerol-3-phosphate (G3P) to form lysophosphatidic acid (LPA). This enzyme utilizes acyl-phosphate as fatty acyl donor, but not acyl-CoA or acyl-ACP. The polypeptide is Glycerol-3-phosphate acyltransferase (Serratia proteamaculans (strain 568)).